Here is a 60-residue protein sequence, read N- to C-terminus: Metallothionein A (60 aa).

The beta stretch occupies residues 1–28; that stretch reads MDPCDCSKSGTCNCGGSCTCTNCSCKSC. Residues C4, C6, C12, C14, C18, C20, C23, C25, C28, C32, C33, C35, C36, C40, C43, C47, C49, C54, C58, and C59 each coordinate a divalent metal cation. Positions 29–60 are alpha; it reads KKSCCPCCPSGCTKCASGCVCKGKTCDTSCCQ.

Belongs to the metallothionein superfamily. Type 1 family.

Metallothioneins have a high content of cysteine residues that bind various heavy metals. The chain is Metallothionein A (mta) from Chionodraco hamatus (Antarctic teleost icefish).